The following is a 397-amino-acid chain: RNA pseudouridine synthase 5 (397 aa).

In terms of domain architecture, S4 RNA-binding spans 64-114 (APLPGWIKRIRDGQITVDGEVATDPDMILREGSKLVYHRLPWQEPFAPHLL).

The protein belongs to the pseudouridine synthase RluA family.

The enzyme catalyses a uridine in RNA = a pseudouridine in RNA. The sequence is that of RNA pseudouridine synthase 5 from Oryza sativa subsp. japonica (Rice).